Reading from the N-terminus, the 557-residue chain is Enhancer of polycomb-like protein 1 (557 aa).

Disordered stretches follow at residues 323–349 (VKPA…RPQP) and 424–449 (QSHN…TYST). Residues 327 to 337 (APVPTPAPPVK) are compositionally biased toward pro residues. The segment covering 429-441 (LSIPSSTPSTPLS) has biased composition (low complexity).

This sequence belongs to the enhancer of polycomb family. In terms of assembly, component of the NuA4 histone acetyltransferase complex.

The protein localises to the nucleus. Its function is as follows. Component of the NuA4 histone acetyltransferase complex which is involved in transcriptional activation of selected genes principally by acetylation of nucleosomal histone H4 and H2A. The NuA4 complex is also involved in DNA repair. Involved in gene silencing by neighboring heterochromatin, blockage of the silencing spreading along the chromosome, and required for cell cycle progression through G2/M. This chain is Enhancer of polycomb-like protein 1 (epl1), found in Schizosaccharomyces pombe (strain 972 / ATCC 24843) (Fission yeast).